Reading from the N-terminus, the 227-residue chain is MTSIDFPLLNRRTQNSVISTTPNELSNWSRLSSLWPLLYGTSCCFIEFASLIGSRFDFDRYGLVPRSSPRQADLILTAGTVTMKMAPSLVRLYEQMPEPKYVIAMGACTITGGMFSTDSYSTVRGVDKLLPVDVYLPGCPPKPEAVIDAITKLRKKISREIYADRIRSHRTNRSFTTNHKFQVGRSSHTGNYDQGFLSKPPSISEIPPETFFKYKSQSSVSSHALVN.

4 residues coordinate [4Fe-4S] cluster: Cys43, Cys44, Cys108, and Cys139. Over residues 173-192 the composition is skewed to polar residues; that stretch reads RSFTTNHKFQVGRSSHTGNY. The segment at 173 to 201 is disordered; it reads RSFTTNHKFQVGRSSHTGNYDQGFLSKPP.

This sequence belongs to the complex I 20 kDa subunit family. As to quaternary structure, NDH is composed of at least 16 different subunits, 5 of which are encoded in the nucleus. Requires [4Fe-4S] cluster as cofactor.

The protein localises to the plastid. It localises to the chloroplast thylakoid membrane. It carries out the reaction a plastoquinone + NADH + (n+1) H(+)(in) = a plastoquinol + NAD(+) + n H(+)(out). It catalyses the reaction a plastoquinone + NADPH + (n+1) H(+)(in) = a plastoquinol + NADP(+) + n H(+)(out). NDH shuttles electrons from NAD(P)H:plastoquinone, via FMN and iron-sulfur (Fe-S) centers, to quinones in the photosynthetic chain and possibly in a chloroplast respiratory chain. The immediate electron acceptor for the enzyme in this species is believed to be plastoquinone. Couples the redox reaction to proton translocation, and thus conserves the redox energy in a proton gradient. The sequence is that of NAD(P)H-quinone oxidoreductase subunit K, chloroplastic from Trachelium caeruleum (Blue throatwort).